The sequence spans 144 residues: DNA polymerase III subunit chi (144 aa).

The protein belongs to the DNA polymerase III chi/HolC chain family. DNA polymerase III contains a core (composed of alpha, epsilon and theta chains) that associates with a tau subunit. This core dimerizes to form the POLIII' complex. PolIII' associates with the gamma complex (composed of gamma, delta, delta', psi and chi chains) and with the beta chain to form the complete DNA polymerase III complex. Interacts directly with the psi subunit (holD). The only subunit of the DNA polymerase III holoenzyme known to interact with single-stranded DNA binding protein (SSB), interacts directly with DNA helicase YoaA.

It carries out the reaction DNA(n) + a 2'-deoxyribonucleoside 5'-triphosphate = DNA(n+1) + diphosphate. Functionally, part of the beta sliding clamp loading complex, which hydrolyzes ATP to load the beta clamp onto primed DNA to form the DNA replication pre-initiation complex. DNA polymerase III is a complex, multichain enzyme responsible for most of the replicative synthesis in bacteria. This DNA polymerase also exhibits 3' to 5' exonuclease activity. This subunit may stabilize YoaA and/or stimulate the helicase activity of YoaA. This is DNA polymerase III subunit chi (holC) from Haemophilus influenzae (strain ATCC 51907 / DSM 11121 / KW20 / Rd).